Reading from the N-terminus, the 380-residue chain is Actinidain (380 aa).

Residues 1–24 form the signal peptide; it reads MGLPKSFVSMSLLFFSTLLILSLA. Positions 25-126 are cleaved as a propeptide — activation peptide; the sequence is FNAKNLTQRT…NRYEPRVGQV (102 aa). Residues asparagine 29, asparagine 81, and asparagine 111 are each glycosylated (N-linked (GlcNAc...) asparagine). 3 cysteine pairs are disulfide-bonded: cysteine 148-cysteine 191, cysteine 182-cysteine 224, and cysteine 282-cysteine 332. The active site involves cysteine 151. Catalysis depends on residues histidine 288 and asparagine 308.

The protein belongs to the peptidase C1 family. Fruit, present in small cells of the outer pericarp of mature fruit, but not large cells.

It catalyses the reaction Specificity close to that of papain.. Cysteine protease responsible for the cleavage of kiwellin into kissper and KiTH. The chain is Actinidain from Actinidia deliciosa (Kiwi).